The sequence spans 184 residues: Shikimate kinase (184 aa).

An ATP-binding site is contributed by 12 to 17 (GSGKST). Ser-16 lines the Mg(2+) pocket. Substrate is bound by residues Asp-34, Arg-58, and Gly-80. Arg-117 provides a ligand contact to ATP. Arg-136 is a substrate binding site. Position 153 (Arg-153) interacts with ATP. Residues 164-184 (SRLDDPTPNTSPSSTASGAAT) are disordered. The span at 169 to 184 (PTPNTSPSSTASGAAT) shows a compositional bias: low complexity.

Belongs to the shikimate kinase family. As to quaternary structure, monomer. Requires Mg(2+) as cofactor.

The protein localises to the cytoplasm. It carries out the reaction shikimate + ATP = 3-phosphoshikimate + ADP + H(+). It participates in metabolic intermediate biosynthesis; chorismate biosynthesis; chorismate from D-erythrose 4-phosphate and phosphoenolpyruvate: step 5/7. Functionally, catalyzes the specific phosphorylation of the 3-hydroxyl group of shikimic acid using ATP as a cosubstrate. In Mycobacterium ulcerans (strain Agy99), this protein is Shikimate kinase.